We begin with the raw amino-acid sequence, 494 residues long: Glycerol kinase (494 aa).

Residue Thr-13 participates in ADP binding. Thr-13, Thr-14, and Ser-15 together coordinate ATP. Thr-13 is a binding site for sn-glycerol 3-phosphate. Arg-17 serves as a coordination point for ADP. Sn-glycerol 3-phosphate contacts are provided by Arg-83, Glu-84, Tyr-135, and Asp-244. Glycerol contacts are provided by Arg-83, Glu-84, Tyr-135, Asp-244, and Gln-245. Positions 266 and 309 each coordinate ADP. Residues Thr-266, Gly-309, Gln-313, and Gly-410 each coordinate ATP. The ADP site is built by Gly-410 and Asn-414.

The protein belongs to the FGGY kinase family.

It catalyses the reaction glycerol + ATP = sn-glycerol 3-phosphate + ADP + H(+). It functions in the pathway polyol metabolism; glycerol degradation via glycerol kinase pathway; sn-glycerol 3-phosphate from glycerol: step 1/1. With respect to regulation, inhibited by fructose 1,6-bisphosphate (FBP). Functionally, key enzyme in the regulation of glycerol uptake and metabolism. Catalyzes the phosphorylation of glycerol to yield sn-glycerol 3-phosphate. In Shewanella sp. (strain MR-4), this protein is Glycerol kinase.